The sequence spans 308 residues: Probable 5-dehydro-4-deoxyglucarate dehydratase (308 aa).

Belongs to the DapA family.

It catalyses the reaction 5-dehydro-4-deoxy-D-glucarate + H(+) = 2,5-dioxopentanoate + CO2 + H2O. It participates in carbohydrate acid metabolism; D-glucarate degradation; 2,5-dioxopentanoate from D-glucarate: step 2/2. In Bacillus licheniformis (strain ATCC 14580 / DSM 13 / JCM 2505 / CCUG 7422 / NBRC 12200 / NCIMB 9375 / NCTC 10341 / NRRL NRS-1264 / Gibson 46), this protein is Probable 5-dehydro-4-deoxyglucarate dehydratase.